A 953-amino-acid chain; its full sequence is Isoleucine--tRNA ligase (953 aa).

The 'HIGH' region signature appears at 58 to 68; it reads PYANGNIHLGH. Residue glutamate 565 participates in L-isoleucyl-5'-AMP binding. Positions 606 to 610 match the 'KMSKS' region motif; sequence KMSKS. Residue lysine 609 coordinates ATP. Residues cysteine 916, cysteine 919, cysteine 936, and cysteine 939 each contribute to the Zn(2+) site.

Belongs to the class-I aminoacyl-tRNA synthetase family. IleS type 1 subfamily. In terms of assembly, monomer. It depends on Zn(2+) as a cofactor.

It is found in the cytoplasm. It carries out the reaction tRNA(Ile) + L-isoleucine + ATP = L-isoleucyl-tRNA(Ile) + AMP + diphosphate. Functionally, catalyzes the attachment of isoleucine to tRNA(Ile). As IleRS can inadvertently accommodate and process structurally similar amino acids such as valine, to avoid such errors it has two additional distinct tRNA(Ile)-dependent editing activities. One activity is designated as 'pretransfer' editing and involves the hydrolysis of activated Val-AMP. The other activity is designated 'posttransfer' editing and involves deacylation of mischarged Val-tRNA(Ile). The chain is Isoleucine--tRNA ligase from Colwellia psychrerythraea (strain 34H / ATCC BAA-681) (Vibrio psychroerythus).